A 336-amino-acid polypeptide reads, in one-letter code: Isethionate-binding periplasmic protein DctP (336 aa).

The first 23 residues, 1-23 (MKHLLKAGALVALACIVTLTAGA), serve as a signal peptide directing secretion.

This sequence belongs to the bacterial solute-binding protein 7 family. In terms of assembly, the complex comprises the periplasmic solute receptor protein DctP, and the fused transmembrane protein DctMQ.

Its subcellular location is the periplasm. The enzyme catalyses 2-hydroxyethane-1-sulfonate(out) + Na(+)(out) = 2-hydroxyethane-1-sulfonate(in) + Na(+)(in). It participates in organosulfur degradation; alkanesulfonate degradation. Part of the tripartite ATP-independent periplasmic (TRAP) transport system DctPQM involved in the uptake of isethionate (2-hydroxyethanesulfonate), which is then catabolized by enzymes encoded by adjacent genes in the locus. The DctP subunit is the solute-binding protein. Thereby is involved in an anaerobic respiration pathway that converts the sulfonate isethionate to ammonia, acetate and sulfide. This Oleidesulfovibrio alaskensis (strain ATCC BAA-1058 / DSM 17464 / G20) (Desulfovibrio alaskensis) protein is Isethionate-binding periplasmic protein DctP.